The primary structure comprises 475 residues: UDP-N-acetylmuramate--L-alanine ligase (475 aa).

119-125 is an ATP binding site; that stretch reads GTHGKTT.

Belongs to the MurCDEF family.

The protein resides in the cytoplasm. It carries out the reaction UDP-N-acetyl-alpha-D-muramate + L-alanine + ATP = UDP-N-acetyl-alpha-D-muramoyl-L-alanine + ADP + phosphate + H(+). It functions in the pathway cell wall biogenesis; peptidoglycan biosynthesis. Its function is as follows. Cell wall formation. This is UDP-N-acetylmuramate--L-alanine ligase from Wigglesworthia glossinidia brevipalpis.